Here is a 193-residue protein sequence, read N- to C-terminus: MAEHKPDIMYGTTIITVRKGGKVVIAGDGQVSFGQTIMKGNARKVRRLGKSGTVIAGFAGATADAFTLLERLETKLEQYPDQLMRACVELAKDWRTDRYLRRLEAMMLVADKKITLALTGLGDVLEPEDGIMAIGSGGNFALSAAWALVDMNLDAETIARKAMDIAAKICVYTNDHFTIETLDAELSSLEKAI.

Threonine 12 is an active-site residue. Na(+)-binding residues include alanine 167, cysteine 170, and threonine 173.

The protein belongs to the peptidase T1B family. HslV subfamily. A double ring-shaped homohexamer of HslV is capped on each side by a ring-shaped HslU homohexamer. The assembly of the HslU/HslV complex is dependent on binding of ATP.

The protein localises to the cytoplasm. It catalyses the reaction ATP-dependent cleavage of peptide bonds with broad specificity.. Allosterically activated by HslU binding. Its function is as follows. Protease subunit of a proteasome-like degradation complex believed to be a general protein degrading machinery. This Bartonella quintana (strain Toulouse) (Rochalimaea quintana) protein is ATP-dependent protease subunit HslV.